Here is a 132-residue protein sequence, read N- to C-terminus: MYTDPIADYLTRVRNAVAANHKVVEIPASNLKKEITKILFDQGYILSYKFEQNTVQGSIKIALKYDKDTKEPVIKDIQRISKPGLRKYAGAAKLPRILNGLGIAIVSTSKGLMTGKQAKQLNVGGEVICYVY.

Belongs to the universal ribosomal protein uS8 family. As to quaternary structure, part of the 30S ribosomal subunit. Contacts proteins S5 and S12.

In terms of biological role, one of the primary rRNA binding proteins, it binds directly to 16S rRNA central domain where it helps coordinate assembly of the platform of the 30S subunit. This is Small ribosomal subunit protein uS8 from Flavobacterium johnsoniae (strain ATCC 17061 / DSM 2064 / JCM 8514 / BCRC 14874 / CCUG 350202 / NBRC 14942 / NCIMB 11054 / UW101) (Cytophaga johnsonae).